Here is a 732-residue protein sequence, read N- to C-terminus: Catalase-peroxidase (732 aa).

The segment at residues Trp-97–Tyr-220 is a cross-link (tryptophyl-tyrosyl-methioninium (Trp-Tyr) (with M-246)). The active-site Proton acceptor is the His-98. The segment at residues Tyr-220–Met-246 is a cross-link (tryptophyl-tyrosyl-methioninium (Tyr-Met) (with W-97)). His-261 serves as a coordination point for heme b.

This sequence belongs to the peroxidase family. Peroxidase/catalase subfamily. In terms of assembly, homodimer or homotetramer. Heme b is required as a cofactor. In terms of processing, formation of the three residue Trp-Tyr-Met cross-link is important for the catalase, but not the peroxidase activity of the enzyme.

It catalyses the reaction H2O2 + AH2 = A + 2 H2O. The enzyme catalyses 2 H2O2 = O2 + 2 H2O. In terms of biological role, bifunctional enzyme with both catalase and broad-spectrum peroxidase activity. The chain is Catalase-peroxidase from Pelodictyon phaeoclathratiforme (strain DSM 5477 / BU-1).